The chain runs to 119 residues: Protein TusC (119 aa).

It belongs to the DsrF/TusC family. As to quaternary structure, heterohexamer, formed by a dimer of trimers. The hexameric TusBCD complex contains 2 copies each of TusB, TusC and TusD. The TusBCD complex interacts with TusE.

It is found in the cytoplasm. Part of a sulfur-relay system required for 2-thiolation of 5-methylaminomethyl-2-thiouridine (mnm(5)s(2)U) at tRNA wobble positions. This Buchnera aphidicola subsp. Schizaphis graminum (strain Sg) protein is Protein TusC.